Consider the following 504-residue polypeptide: uncharacterized protein (504 aa).

This is an uncharacterized protein from Klebsiella pneumoniae.